The chain runs to 139 residues: Hydrogenase maturation factor HypA (139 aa).

Ni(2+) is bound at residue histidine 2. Zn(2+)-binding residues include cysteine 73, cysteine 76, cysteine 110, and cysteine 113.

Belongs to the HypA/HybF family.

In terms of biological role, involved in the maturation of [NiFe] hydrogenases. Required for nickel insertion into the metal center of the hydrogenase. The polypeptide is Hydrogenase maturation factor HypA (Pyrococcus horikoshii (strain ATCC 700860 / DSM 12428 / JCM 9974 / NBRC 100139 / OT-3)).